A 318-amino-acid polypeptide reads, in one-letter code: Ribose-phosphate pyrophosphokinase 2 (318 aa).

96–101 (RQDKKD) is an ATP binding site. 4 residues coordinate Mg(2+): aspartate 128, histidine 130, aspartate 139, and aspartate 143. Histidine 130 contacts ATP. The segment at 212-227 (KDRVAILVDDMADTCG) is binding of phosphoribosylpyrophosphate.

Belongs to the ribose-phosphate pyrophosphokinase family. As to quaternary structure, homodimer. The active form is probably a hexamer composed of 3 homodimers. Mg(2+) serves as cofactor.

It catalyses the reaction D-ribose 5-phosphate + ATP = 5-phospho-alpha-D-ribose 1-diphosphate + AMP + H(+). Its pathway is metabolic intermediate biosynthesis; 5-phospho-alpha-D-ribose 1-diphosphate biosynthesis; 5-phospho-alpha-D-ribose 1-diphosphate from D-ribose 5-phosphate (route I): step 1/1. Activated by magnesium and inorganic phosphate. Catalyzes the synthesis of phosphoribosylpyrophosphate (PRPP) that is essential for nucleotide synthesis. This Rattus norvegicus (Rat) protein is Ribose-phosphate pyrophosphokinase 2 (Prps2).